The sequence spans 439 residues: Xylose isomerase (439 aa).

Active-site residues include H101 and D104. Residues E232, E268, H271, D296, D307, D309, and D339 each contribute to the Mg(2+) site.

This sequence belongs to the xylose isomerase family. As to quaternary structure, homotetramer. The cofactor is Mg(2+).

It localises to the cytoplasm. The enzyme catalyses alpha-D-xylose = alpha-D-xylulofuranose. The chain is Xylose isomerase (xylA) from Lactococcus lactis subsp. lactis (strain IL1403) (Streptococcus lactis).